Here is a 345-residue protein sequence, read N- to C-terminus: Ferrochelatase (345 aa).

2 residues coordinate Fe cation: His192 and Glu295.

The protein belongs to the ferrochelatase family.

Its subcellular location is the cytoplasm. The catalysed reaction is heme b + 2 H(+) = protoporphyrin IX + Fe(2+). Its pathway is porphyrin-containing compound metabolism; protoheme biosynthesis; protoheme from protoporphyrin-IX: step 1/1. Catalyzes the ferrous insertion into protoporphyrin IX. This Opitutus terrae (strain DSM 11246 / JCM 15787 / PB90-1) protein is Ferrochelatase.